A 64-amino-acid polypeptide reads, in one-letter code: Putative neurotoxin-H (64 aa).

A signal peptide spans 1–19 (MYATVTVTVLLLISSGIFC). Cystine bridges form between Cys-25/Cys-45, Cys-32/Cys-54, and Cys-36/Cys-56.

In terms of tissue distribution, expressed by the venom gland.

Its subcellular location is the secreted. This is Putative neurotoxin-H from Lychas mucronatus (Chinese swimming scorpion).